We begin with the raw amino-acid sequence, 335 residues long: Glycerol-3-phosphate dehydrogenase [NAD(P)+] (335 aa).

The NADPH site is built by tryptophan 11, arginine 30, and lysine 106. Residues lysine 106, glycine 135, and serine 137 each coordinate sn-glycerol 3-phosphate. Alanine 139 contacts NADPH. Sn-glycerol 3-phosphate contacts are provided by lysine 190, aspartate 243, serine 253, arginine 254, and asparagine 255. Lysine 190 acts as the Proton acceptor in catalysis. Arginine 254 contributes to the NADPH binding site. Positions 278 and 280 each coordinate NADPH.

It belongs to the NAD-dependent glycerol-3-phosphate dehydrogenase family.

The protein resides in the cytoplasm. It carries out the reaction sn-glycerol 3-phosphate + NAD(+) = dihydroxyacetone phosphate + NADH + H(+). The catalysed reaction is sn-glycerol 3-phosphate + NADP(+) = dihydroxyacetone phosphate + NADPH + H(+). It functions in the pathway membrane lipid metabolism; glycerophospholipid metabolism. Catalyzes the reduction of the glycolytic intermediate dihydroxyacetone phosphate (DHAP) to sn-glycerol 3-phosphate (G3P), the key precursor for phospholipid synthesis. This chain is Glycerol-3-phosphate dehydrogenase [NAD(P)+], found in Paucimonas lemoignei (Pseudomonas lemoignei).